We begin with the raw amino-acid sequence, 185 residues long: Elongation factor P (185 aa).

Belongs to the elongation factor P family.

It is found in the cytoplasm. It participates in protein biosynthesis; polypeptide chain elongation. Its function is as follows. Involved in peptide bond synthesis. Stimulates efficient translation and peptide-bond synthesis on native or reconstituted 70S ribosomes in vitro. Probably functions indirectly by altering the affinity of the ribosome for aminoacyl-tRNA, thus increasing their reactivity as acceptors for peptidyl transferase. In Dictyoglomus turgidum (strain DSM 6724 / Z-1310), this protein is Elongation factor P.